Here is a 348-residue protein sequence, read N- to C-terminus: GTPase Obg 1 (348 aa).

The Obg domain occupies 1-159 (MSFVDEAKIH…HCVLLKLKIV (159 aa)). In terms of domain architecture, OBG-type G spans 160–329 (SDVGIIGMPN…LHAQVKKAVV (170 aa)). GTP contacts are provided by residues 166–173 (GMPNAGKS), 191–195 (FTTLE), 212–215 (DIPG), 279–282 (NKCD), and 310–312 (GDE). Residues Ser-173 and Thr-193 each coordinate Mg(2+).

Belongs to the TRAFAC class OBG-HflX-like GTPase superfamily. OBG GTPase family. As to quaternary structure, monomer. The cofactor is Mg(2+).

The protein localises to the cytoplasm. In terms of biological role, an essential GTPase which binds GTP, GDP and possibly (p)ppGpp with moderate affinity, with high nucleotide exchange rates and a fairly low GTP hydrolysis rate. Plays a role in control of the cell cycle, stress response, ribosome biogenesis and in those bacteria that undergo differentiation, in morphogenesis control. The sequence is that of GTPase Obg 1 from Anaplasma marginale (strain St. Maries).